The primary structure comprises 281 residues: Insulin-like growth factor-binding protein 7 (281 aa).

Residues 1-25 form the signal peptide; that stretch reads MERPPRALLLGAAGLLLLLLPLSSS. The 87-residue stretch at 27–113 folds into the IGFBP N-terminal domain; the sequence is SSDACGPCVP…PATLAVCVCK (87 aa). 8 disulfide bridges follow: Cys-31/Cys-56, Cys-34/Cys-58, Cys-39/Cys-59, Cys-47/Cys-62, Cys-70/Cys-86, Cys-80/Cys-110, Cys-112/Cys-130, and Cys-119/Cys-155. One can recognise a Kazal-like domain in the interval 98–157; that stretch reads GAAAGGPATLAVCVCKSRYPVCGSNGITYPSGCQLRAASLRAESRGEKAITQVSKGTCEQ. Positions 159-263 constitute an Ig-like C2-type domain; the sequence is PSIVTPPKDI…GQASAAAKIT (105 aa). Residue Asn-170 is glycosylated (N-linked (GlcNAc...) asparagine). A disulfide bridge connects residues Cys-180 and Cys-247. Ser-238 is modified (phosphoserine).

As to quaternary structure, may interact with VPS24/CHMP3; the relevance of such interaction however remains unclear. Interacts with CD93; this interaction plays a role in endothelial cells angiogenesis. In terms of processing, N-glycosylated. In terms of tissue distribution, expressed at high levels in lung, kidney, small intestine, testis and uterus and at moderate levels in liver.

The protein resides in the secreted. Binds IGF1 and IGF2 with a relatively low affinity. Stimulates prostacyclin (PGI2) production. Stimulates cell adhesion. Acts as a ligand for CD93 to play a role in angiogenesis. The sequence is that of Insulin-like growth factor-binding protein 7 (Igfbp7) from Mus musculus (Mouse).